The following is a 559-amino-acid chain: MAPTLQQAYRRRWWMACTAVLENLFFSAVLLGWGSLLIILKNEGFYSSTCPAESSTNTTQDEQRRWPGCDQQDEMLNLGFTIGSFVLSATTLPLGILMDRFGPRPVRLVGSACFTASCTLMALASRDVEALSPLIFLALSLNGFGGICLTFTSLTLPNMFGNLRSTLMALMIGSYASSAITFPGIKLIYDAGVAFVVIMFTWSGLACLIFLNCTLNWPIEAFPAPEEVNYTKKIKLSGLALDHKVTGDLFYTHVTTMGQRLSQKAPSLEDGSDAFMSPQDVRGTSENLPERSVPLRKSLCSPTFLWSLLTMGMTQLRIIFYMAAVNKMLEYLVTGGQEHETNEQQQKVAETVGFYSSVFGAMQLLCLLTCPLIGYIMDWRIKDCVDAPTQGTVLGDARDGVATKSIRPRYCKIQKLTNAISAFTLTNLLLVGFGITCLINNLHLQFVTFVLHTIVRGFFHSACGSLYAAVFPSNHFGTLTGLQSLISAVFALLQQPLFMAMVGPLKGEPFWVNLGLLLFSLLGFLLPSYLFYYRARLQQEYAANGMGPLKVLSGSEVTA.

The helical transmembrane segment at 20-40 (VLENLFFSAVLLGWGSLLIIL) threads the bilayer. N-linked (GlcNAc...) asparagine glycosylation is present at Asn57. The next 5 membrane-spanning stretches (helical) occupy residues 78–98 (LGFTIGSFVLSATTLPLGILM), 105–124 (PVRLVGSACFTASCTLMALA), 131–151 (LSPLIFLALSLNGFGGICLTF), 168–188 (MALMIGSYASSAITFPGIKLI), and 191–211 (AGVAFVVIMFTWSGLACLIFL). N-linked (GlcNAc...) asparagine glycosylation is found at Asn212 and Asn229. A phosphoserine mark is found at Ser237, Ser262, and Ser267. A run of 6 helical transmembrane segments spans residues 304–324 (FLWSLLTMGMTQLRIIFYMAA), 357–377 (SVFGAMQLLCLLTCPLIGYIM), 419–439 (AISAFTLTNLLLVGFGITCLI), 446–466 (FVTFVLHTIVRGFFHSACGSL), 485–505 (LISAVFALLQQPLFMAMVGPL), and 510–530 (FWVNLGLLLFSLLGFLLPSYL).

It belongs to the SLC43A transporter (TC 2.A.1.44) family. As to expression, ubiquitously expressed in fetus and adult. Highest expression in adult pancreas, liver, skeletal muscle. In fetus, highest expression in liver and lower levels in kidney, and lung. Exclusively expressed in the glomeruli along the glomerular capillary walls.

Its subcellular location is the cell membrane. It is found in the apical cell membrane. It localises to the endoplasmic reticulum membrane. It carries out the reaction D-leucine(in) = D-leucine(out). The catalysed reaction is L-leucine(in) = L-leucine(out). The enzyme catalyses L-isoleucine(in) = L-isoleucine(out). It catalyses the reaction L-methionine(in) = L-methionine(out). It carries out the reaction L-phenylalanine(in) = L-phenylalanine(out). The catalysed reaction is L-valine(in) = L-valine(out). In terms of biological role, uniport that mediates the transport of neutral amino acids such as L-leucine, L-isoleucine, L-valine, and L-phenylalanine. The transport activity is sodium ions-independent, electroneutral and mediated by a facilitated diffusion. The polypeptide is Large neutral amino acids transporter small subunit 3 (Homo sapiens (Human)).